A 156-amino-acid chain; its full sequence is Small ribosomal subunit protein uS7 (156 aa).

This sequence belongs to the universal ribosomal protein uS7 family. As to quaternary structure, part of the 30S ribosomal subunit. Contacts proteins S9 and S11.

Its function is as follows. One of the primary rRNA binding proteins, it binds directly to 16S rRNA where it nucleates assembly of the head domain of the 30S subunit. Is located at the subunit interface close to the decoding center, probably blocks exit of the E-site tRNA. This is Small ribosomal subunit protein uS7 from Chlorobaculum tepidum (strain ATCC 49652 / DSM 12025 / NBRC 103806 / TLS) (Chlorobium tepidum).